The chain runs to 483 residues: Aspartyl/glutamyl-tRNA(Asn/Gln) amidotransferase subunit B (483 aa).

The protein belongs to the GatB/GatE family. GatB subfamily. Heterotrimer of A, B and C subunits.

The enzyme catalyses L-glutamyl-tRNA(Gln) + L-glutamine + ATP + H2O = L-glutaminyl-tRNA(Gln) + L-glutamate + ADP + phosphate + H(+). It catalyses the reaction L-aspartyl-tRNA(Asn) + L-glutamine + ATP + H2O = L-asparaginyl-tRNA(Asn) + L-glutamate + ADP + phosphate + 2 H(+). Functionally, allows the formation of correctly charged Asn-tRNA(Asn) or Gln-tRNA(Gln) through the transamidation of misacylated Asp-tRNA(Asn) or Glu-tRNA(Gln) in organisms which lack either or both of asparaginyl-tRNA or glutaminyl-tRNA synthetases. The reaction takes place in the presence of glutamine and ATP through an activated phospho-Asp-tRNA(Asn) or phospho-Glu-tRNA(Gln). The sequence is that of Aspartyl/glutamyl-tRNA(Asn/Gln) amidotransferase subunit B from Marinobacter nauticus (strain ATCC 700491 / DSM 11845 / VT8) (Marinobacter aquaeolei).